The primary structure comprises 204 residues: MPKLLVVETSPRGAASISRNITKTFVAKWKAAHADSAVVQRDLTGTGLEFVTAPWLEAYFTPPDQHTDAMKQALALSDELVAELLNADELVIGTPVYNYNVPALLKAWIDHIVRKGITLGMDGKGLLTGKKATVLIASGGIYSEGSPIADRAIAPQYLKLILGVIGIENVTIVAGGGAKAVDMGEATMDGFIATLDSELTAAAQ.

Residues Ser10 and 16 to 18 each bind FMN; that span reads SIS.

It belongs to the azoreductase type 1 family. In terms of assembly, homodimer. FMN serves as cofactor.

The catalysed reaction is 2 a quinone + NADH + H(+) = 2 a 1,4-benzosemiquinone + NAD(+). It carries out the reaction N,N-dimethyl-1,4-phenylenediamine + anthranilate + 2 NAD(+) = 2-(4-dimethylaminophenyl)diazenylbenzoate + 2 NADH + 2 H(+). In terms of biological role, quinone reductase that provides resistance to thiol-specific stress caused by electrophilic quinones. Its function is as follows. Also exhibits azoreductase activity. Catalyzes the reductive cleavage of the azo bond in aromatic azo compounds to the corresponding amines. The chain is FMN-dependent NADH:quinone oxidoreductase 2 from Jannaschia sp. (strain CCS1).